The sequence spans 77 residues: Acyl carrier protein (77 aa).

One can recognise a Carrier domain in the interval 1-76 (MENFDKVKDI…DAVKFINSLE (76 aa)). Serine 36 is modified (O-(pantetheine 4'-phosphoryl)serine).

The protein belongs to the acyl carrier protein (ACP) family. In terms of processing, 4'-phosphopantetheine is transferred from CoA to a specific serine of apo-ACP by AcpS. This modification is essential for activity because fatty acids are bound in thioester linkage to the sulfhydryl of the prosthetic group.

Its subcellular location is the cytoplasm. Its pathway is lipid metabolism; fatty acid biosynthesis. In terms of biological role, carrier of the growing fatty acid chain in fatty acid biosynthesis. This is Acyl carrier protein from Staphylococcus aureus (strain Mu3 / ATCC 700698).